The sequence spans 278 residues: Orotidine 5'-phosphate decarboxylase (278 aa).

Lys95 (proton donor) is an active-site residue.

Belongs to the OMP decarboxylase family. Type 2 subfamily.

It carries out the reaction orotidine 5'-phosphate + H(+) = UMP + CO2. Its pathway is pyrimidine metabolism; UMP biosynthesis via de novo pathway; UMP from orotate: step 2/2. The protein is Orotidine 5'-phosphate decarboxylase of Methylibium petroleiphilum (strain ATCC BAA-1232 / LMG 22953 / PM1).